A 632-amino-acid polypeptide reads, in one-letter code: MAEETQHNKLAAAKKKLKEYWQKNSPRVPAGANRNRKTNGSVPEKATSGGCQPPGDSATGFHREGPTSSATLKDLESPCQERAVVLDSRSVEISQLKNTIKSLKQQKKQVEHQLEEEKKANNKKQKAKRVLEVQIQTLNIQKGKLNTDLYHMKRSLRYFEEKSKDLAVCLQHSLQRKGELESVLSNVMATQKKKANQLSSRSKARTEWKLEQSMREEALLKVQLTQLKESFQQVQLERDECAEHLKGERARWQQRMRKMSQEICTLKKEKQQDMRRVEKLERSLSKLKNQMAEPLPPEPPAVPSEVELQHLRKELERVAGELQAQVKKNQRISLLNQRQEERIQEQEERLRKQEERIQEQHKSLQQLAKPQSVFEEPNNENKNALQLEQQVKELQEKLGEEHLEAASQQNQQLTAQLSLMALPGEGHGGEHLDSEGEEAPRPMPSVPEDPESREAMSSFMDHLEEKADLSELVKKKELCFIHHWRDRCHQKTHHLLSEPGGRAKDAALGGGHHQAGAQGGDEGEAAGAAADGIAAYSNYNNGHRKFLAAAHNSADEPGPGAPAPQELGAADKHGDLCEVSLTSSAQGEAREDPLLDKPTAQPIVQDHQEHPGLGSNCCVPLLCWAWLPRRRR.

The interval 1-77 is disordered; the sequence is MAEETQHNKL…SSATLKDLES (77 aa). Coiled-coil stretches lie at residues 110 to 201 and 240 to 468; these read VEHQ…LSSR and ECAE…EKAD. Basic and acidic residues-rich tracts occupy residues 352 to 362 and 427 to 440; these read KQEERIQEQHK and HGGE…EEAP. Disordered stretches follow at residues 352–379, 423–452, and 496–524; these read KQEE…EPNN, PGEG…DPES, and LSEP…DEGE. Residues 508–520 are compositionally biased toward gly residues; sequence LGGGHHQAGAQGG.

This sequence belongs to the GOLGA8 family.

In Homo sapiens (Human), this protein is Golgin subfamily A member 8H (GOLGA8H).